The following is a 217-amino-acid chain: Nascent polypeptide-associated complex subunit alpha-like protein 2 (217 aa).

Positions 1–81 are disordered; it reads MSPPPAVVTE…SEKKSRKAML (81 aa). Positions 37-60 are enriched in acidic residues; the sequence is PIVEDVKDDEDDDDDDEEEEDDDA. Residues 70–135 form the NAC-A/B domain; sequence SRSEKKSRKA…AKIEDLSSQL (66 aa). The UBA domain occupies 178-215; the sequence is VEARDIDLVMTQAGVSRSKAVKALKSHDGDIVSAIMEL.

The protein belongs to the NAC-alpha family.

In terms of biological role, may promote appropriate targeting of ribosome-nascent polypeptide complexes. The polypeptide is Nascent polypeptide-associated complex subunit alpha-like protein 2 (Arabidopsis thaliana (Mouse-ear cress)).